A 426-amino-acid polypeptide reads, in one-letter code: Putative phosphate permease TC_0064 (426 aa).

Helical transmembrane passes span 1–21 (MWWLLVCVVIGGFYTAWNIGA), 37–57 (LTLRQAVLIAAVFEFLGAVVL), 83–103 (VFGMTAALFATGVWLQIASFF), 104–124 (GWPVSTTHAIVGGVLGFGIIL), 140–160 (VSWLASPIIGGYFAFLIFSFI), 183–203 (AIIIFALGLILILSGAVARVV), 207–227 (VAFRVVCGLVVFAFAFTIWGV), 260–280 (LVVERIFAYLQIVIACFMSFA), 309–329 (VLFIFMSLGGLGLVFGLATWG), 365–385 (FGFPISTTHVVVGAVLGVGLA), and 399–419 (IVLSWFVTVPAGAALSIMFFL).

The protein belongs to the inorganic phosphate transporter (PiT) (TC 2.A.20) family.

The protein localises to the cell membrane. Potential transporter for phosphate. This Chlamydia muridarum (strain MoPn / Nigg) protein is Putative phosphate permease TC_0064.